The following is a 342-amino-acid chain: Trans-3-hydroxy-L-proline dehydratase (342 aa).

The active-site Proton acceptor is the Ser90. Substrate-binding positions include 91 to 92, Asp252, and 257 to 258; these read GS and GT.

Belongs to the proline racemase family.

The enzyme catalyses trans-3-hydroxy-L-proline = 1-pyrroline-2-carboxylate + H2O. Functionally, catalyzes the dehydration of trans-3-hydroxy-L-proline (t3LHyp) to Delta(1)-pyrroline-2-carboxylate (Pyr2C). Can also catalyze the epimerization of trans-4-hydroxy-L-proline (t4LHyp) to cis-4-hydroxy-D-proline (c4DHyp), albeit with 150-fold lower efficiency. May be involved in the degradation pathway that converts t3LHyp to L-proline, which would allow R.meliloti to grow on t3LHyp as a sole carbon source. Displays no proline racemase activity. The protein is Trans-3-hydroxy-L-proline dehydratase of Rhizobium meliloti (strain 1021) (Ensifer meliloti).